A 156-amino-acid chain; its full sequence is ATP synthase subunit b (156 aa).

Residues 5 to 25 form a helical membrane-spanning segment; sequence LTLIGQAIAFAVFVWFCMKFV.

It belongs to the ATPase B chain family. In terms of assembly, F-type ATPases have 2 components, F(1) - the catalytic core - and F(0) - the membrane proton channel. F(1) has five subunits: alpha(3), beta(3), gamma(1), delta(1), epsilon(1). F(0) has three main subunits: a(1), b(2) and c(10-14). The alpha and beta chains form an alternating ring which encloses part of the gamma chain. F(1) is attached to F(0) by a central stalk formed by the gamma and epsilon chains, while a peripheral stalk is formed by the delta and b chains.

The protein localises to the cell inner membrane. Functionally, f(1)F(0) ATP synthase produces ATP from ADP in the presence of a proton or sodium gradient. F-type ATPases consist of two structural domains, F(1) containing the extramembraneous catalytic core and F(0) containing the membrane proton channel, linked together by a central stalk and a peripheral stalk. During catalysis, ATP synthesis in the catalytic domain of F(1) is coupled via a rotary mechanism of the central stalk subunits to proton translocation. In terms of biological role, component of the F(0) channel, it forms part of the peripheral stalk, linking F(1) to F(0). The protein is ATP synthase subunit b of Chromohalobacter salexigens (strain ATCC BAA-138 / DSM 3043 / CIP 106854 / NCIMB 13768 / 1H11).